We begin with the raw amino-acid sequence, 93 residues long: Small ribosomal subunit protein uS19 (93 aa).

This sequence belongs to the universal ribosomal protein uS19 family.

Functionally, protein S19 forms a complex with S13 that binds strongly to the 16S ribosomal RNA. The sequence is that of Small ribosomal subunit protein uS19 from Mycobacterium marinum (strain ATCC BAA-535 / M).